The primary structure comprises 697 residues: SPX domain-containing membrane protein At1g63010 (697 aa).

The region spanning 2 to 145 (VAFGKYLQRK…GYRFADYYVK (144 aa)) is the SPX domain. Transmembrane regions (helical) follow at residues 247-267 (FNSL…TYII), 278-298 (LGAA…AQVF), 315-335 (LVFS…AYDA), 337-356 (SIAL…ARAV), 375-395 (AGFV…AGLL), and 411-431 (LPGW…CISF). The tract at residues 439–459 (EDGEKNNRNETTSDRVESSRV) is disordered. 5 helical membrane-spanning segments follow: residues 513–533 (LLIY…SSVI), 544–564 (SVAI…ILVG), 576–596 (ILLT…NLFV), 604–624 (VISG…NLSL), and 670–690 (LLNA…VATC).

It belongs to the major facilitator superfamily.

It localises to the membrane. The polypeptide is SPX domain-containing membrane protein At1g63010 (Arabidopsis thaliana (Mouse-ear cress)).